A 200-amino-acid chain; its full sequence is NADH-quinone oxidoreductase subunit C (200 aa).

The protein belongs to the complex I 30 kDa subunit family. As to quaternary structure, NDH-1 is composed of 14 different subunits. Subunits NuoB, C, D, E, F, and G constitute the peripheral sector of the complex.

The protein resides in the cell inner membrane. The catalysed reaction is a quinone + NADH + 5 H(+)(in) = a quinol + NAD(+) + 4 H(+)(out). Functionally, NDH-1 shuttles electrons from NADH, via FMN and iron-sulfur (Fe-S) centers, to quinones in the respiratory chain. The immediate electron acceptor for the enzyme in this species is believed to be ubiquinone. Couples the redox reaction to proton translocation (for every two electrons transferred, four hydrogen ions are translocated across the cytoplasmic membrane), and thus conserves the redox energy in a proton gradient. In Parvibaculum lavamentivorans (strain DS-1 / DSM 13023 / NCIMB 13966), this protein is NADH-quinone oxidoreductase subunit C.